Here is a 473-residue protein sequence, read N- to C-terminus: Vasculin (473 aa).

3 disordered regions span residues methionine 1–asparagine 25, arginine 46–asparagine 149, and valine 191–aspartate 342. Phosphoserine is present on serine 49. Position 87 is an omega-N-methylarginine (arginine 87). Positions glutamate 119–glutamate 133 are enriched in basic and acidic residues. Polar residues-rich tracts occupy residues leucine 194–glycine 204 and alanine 251–arginine 286. A phosphoserine mark is found at serine 274, serine 276, serine 322, and serine 381. The segment covering methionine 293–phenylalanine 329 has biased composition (basic and acidic residues). The tract at residues glycine 444–valine 473 is disordered. Over residues glutamate 456–valine 473 the composition is skewed to acidic residues.

It belongs to the vasculin family. In terms of assembly, interacts with GTF2B, GTF2F2, RNA polymerase II and TBP. In terms of tissue distribution, widely expressed. Some isoforms may be specifically expressed in veins and arteries (at protein level). Isoform 4 is widely expressed. Isoform 1, isoform 2 and isoform 3 may be specifically expressed in vascular smooth muscle cells.

The protein resides in the nucleus. The protein localises to the cytoplasm. Functions as a GC-rich promoter-specific transactivating transcription factor. This chain is Vasculin (GPBP1), found in Homo sapiens (Human).